A 389-amino-acid polypeptide reads, in one-letter code: 26S proteasome regulatory subunit 10B (389 aa).

K72 bears the N6-acetyllysine mark. 174–181 (GPPGTGKT) serves as a coordination point for ATP. K206 is modified (N6-acetyllysine). S244 is subject to Phosphoserine.

The protein belongs to the AAA ATPase family. In terms of assembly, component of the 19S proteasome regulatory particle complex. The 26S proteasome consists of a 20S core particle (CP) and two 19S regulatory subunits (RP). The regulatory particle is made of a lid composed of 9 subunits, a base containing 6 ATPases including PSMC6 and few additional components. Interacts with PAAF1.

It localises to the cytoplasm. Its subcellular location is the nucleus. Functionally, component of the 26S proteasome, a multiprotein complex involved in the ATP-dependent degradation of ubiquitinated proteins. This complex plays a key role in the maintenance of protein homeostasis by removing misfolded or damaged proteins, which could impair cellular functions, and by removing proteins whose functions are no longer required. Therefore, the proteasome participates in numerous cellular processes, including cell cycle progression, apoptosis, or DNA damage repair. PSMC6 belongs to the heterohexameric ring of AAA (ATPases associated with diverse cellular activities) proteins that unfolds ubiquitinated target proteins that are concurrently translocated into a proteolytic chamber and degraded into peptides. This is 26S proteasome regulatory subunit 10B (PSMC6) from Bos taurus (Bovine).